We begin with the raw amino-acid sequence, 365 residues long: MSHNTFGHLFRVTTWGESHGPALGCVVDGAPPRLPLKAEDIQQWLDRRKPGQSRFTTQRREPDAVKILSGTFVEDGIEMTTGTPISLMIENVDQRSKDYGDIVEKFRPGHADLTYFLKYGIRDYRGGGRSSARETAARVAAGAVARAMLPEMMIRGALVQMGPHKIDRANWDWNEVGNNPFWCPDAKAAAEWEIYLDSVRKAGSSCGAVIEIVASGVPAGLGSPIYGKLDAELASALMSINAVKGVEIGDGFGAAALSGEENADEMQSGPHGIEFSSNHAGGVLGGISTGQDVVARFAVKPTSSILSPRKTVTKGGDDTEIVTKGRHDPCVGIRAVPVGEAMMACVLADQLLRHRAQMGGSGRNE.

The NADP(+) site is built by arginine 48 and arginine 54. FMN-binding positions include 129 to 131 (RSS), 241 to 242 (NA), glycine 285, 300 to 304 (KPTSS), and arginine 326.

It belongs to the chorismate synthase family. As to quaternary structure, homotetramer. FMNH2 serves as cofactor.

The catalysed reaction is 5-O-(1-carboxyvinyl)-3-phosphoshikimate = chorismate + phosphate. It functions in the pathway metabolic intermediate biosynthesis; chorismate biosynthesis; chorismate from D-erythrose 4-phosphate and phosphoenolpyruvate: step 7/7. Its function is as follows. Catalyzes the anti-1,4-elimination of the C-3 phosphate and the C-6 proR hydrogen from 5-enolpyruvylshikimate-3-phosphate (EPSP) to yield chorismate, which is the branch point compound that serves as the starting substrate for the three terminal pathways of aromatic amino acid biosynthesis. This reaction introduces a second double bond into the aromatic ring system. This is Chorismate synthase from Parvibaculum lavamentivorans (strain DS-1 / DSM 13023 / NCIMB 13966).